The sequence spans 167 residues: Phosphorelay intermediate protein YPD1 (167 aa).

The region spanning 24-129 is the HPt domain; sequence DSDFSKGLII…DDEEIKIQVD (106 aa). Histidine 64 is modified (phosphohistidine).

The protein belongs to the YPD1 family. In terms of assembly, interacts with the response regulatory domains of SLN1 and SSK1. The phosphorelay mechanism involves the sequential transfer of a phosphate group from 'His-576' (H1) to 'Asp-1144' (D1) of SLN1, then to His-64 (H2) of YPD1 and finally to 'Asp-554' (D2) of SSK1 or 'Asp-427' (D2) of SKN7.

The protein resides in the cytoplasm. Its subcellular location is the nucleus. Its function is as follows. Phosphorelay intermediate protein that is part of the branched SLN1-YPD1-SKN7/SSK1 two-component regulatory system, which controls activity of the HOG1 pathway and gene expression in response to changes in the osmolarity of the extracellular environment. Catalyzes the phosphoryl group transfer from the membrane-bound osmosensing histidine kinase SLN1 to two distinct response regulator proteins, SSK1 in the cytoplasm, and transcription factor SKN7 in the nucleus. This is Phosphorelay intermediate protein YPD1 (YPD1) from Saccharomyces cerevisiae (strain ATCC 204508 / S288c) (Baker's yeast).